A 930-amino-acid polypeptide reads, in one-letter code: RNA-binding protein 10 (930 aa).

Basic and acidic residues-rich tracts occupy residues M1–G14 and R21–P45. The disordered stretch occupies residues M1–A127. Acidic residues predominate over residues D59–Y70. S61 and S89 each carry phosphoserine. The span at R80 to S89 shows a compositional bias: basic residues. A compositionally biased stretch (basic and acidic residues) spans R98–Q111. Residues G112 to E125 are compositionally biased toward acidic residues. Residues N129–P209 enclose the RRM 1 domain. Residues K212 to E242 form a RanBP2-type zinc finger. The RRM 2 domain occupies D300 to G384. K383 is subject to N6-acetyllysine. 5 disordered regions span residues G464–A487, A503–N522, E537–V566, E620–K646, and D712–L753. Positions Y507–N522 are enriched in polar residues. Residues S540–S562 are compositionally biased toward low complexity. Residues A623–K639 are compositionally biased toward basic and acidic residues. S718, S723, S733, S736, and S738 each carry phosphoserine. Over residues E743 to L753 the composition is skewed to basic and acidic residues. Residues L759–H784 form a C2H2-type; atypical zinc finger. A phosphoserine mark is found at S781, S797, and S845. The tract at residues A818 to I861 is disordered. Residues S858–S904 form the G-patch domain. At R902 the chain carries Omega-N-methylarginine.

In terms of assembly, associates with the spliceosome. Component of a large chromatin remodeling complex, at least composed of MYSM1, PCAF, RBM10 and KIF11/TRIP5.

Its subcellular location is the nucleus. Binds to ssRNA containing the consensus sequence 5'-AGGUAA-3'. May be involved in post-transcriptional processing, most probably in mRNA splicing. Binds to RNA homopolymers, with a preference for poly(G) and poly(U) and little for poly(A). May bind to specific miRNA hairpins. The chain is RNA-binding protein 10 from Mus musculus (Mouse).